The following is a 217-amino-acid chain: Ras-related protein RABA1e (217 aa).

20-27 (GDSGVGKS) contacts GTP. The Effector region motif lies at 42 to 50 (SKSTIGVEF). GTP is bound by residues 68–72 (DTAGQ), 126–129 (NKAD), and 156–157 (SA). S-geranylgeranyl cysteine attachment occurs at residues Cys-214 and Cys-215.

It belongs to the small GTPase superfamily. Rab family.

It is found in the cell membrane. Intracellular vesicle trafficking and protein transport. The chain is Ras-related protein RABA1e (RABA1E) from Arabidopsis thaliana (Mouse-ear cress).